Here is a 365-residue protein sequence, read N- to C-terminus: Cobalt-precorrin-5B C(1)-methyltransferase (365 aa).

It belongs to the CbiD family.

The catalysed reaction is Co-precorrin-5B + S-adenosyl-L-methionine = Co-precorrin-6A + S-adenosyl-L-homocysteine. The protein operates within cofactor biosynthesis; adenosylcobalamin biosynthesis; cob(II)yrinate a,c-diamide from sirohydrochlorin (anaerobic route): step 6/10. Functionally, catalyzes the methylation of C-1 in cobalt-precorrin-5B to form cobalt-precorrin-6A. The polypeptide is Cobalt-precorrin-5B C(1)-methyltransferase (Clostridium perfringens (strain ATCC 13124 / DSM 756 / JCM 1290 / NCIMB 6125 / NCTC 8237 / Type A)).